A 308-amino-acid polypeptide reads, in one-letter code: Ribosomal RNA small subunit methyltransferase H (308 aa).

S-adenosyl-L-methionine contacts are provided by residues 33–35, Asp-52, Tyr-81, Asp-99, and Gln-106; that span reads GGH.

It belongs to the methyltransferase superfamily. RsmH family.

Its subcellular location is the cytoplasm. The catalysed reaction is cytidine(1402) in 16S rRNA + S-adenosyl-L-methionine = N(4)-methylcytidine(1402) in 16S rRNA + S-adenosyl-L-homocysteine + H(+). Its function is as follows. Specifically methylates the N4 position of cytidine in position 1402 (C1402) of 16S rRNA. The chain is Ribosomal RNA small subunit methyltransferase H from Francisella philomiragia subsp. philomiragia (strain ATCC 25017 / CCUG 19701 / FSC 153 / O#319-036).